An 814-amino-acid polypeptide reads, in one-letter code: Kexin (814 aa).

A signal peptide spans 1-19; that stretch reads MKVRKYITLCFWWAFSTSA. Residues 20 to 109 constitute a propeptide that is removed on maturation; the sequence is LVSSQQIPLK…LFPRNDLFKR (90 aa). Asn42 carries an N-linked (GlcNAc...) asparagine glycan. Residues 110–113 constitute a propeptide, removed by dipeptidylpeptidase STE13; sequence LPVP. At 114 to 678 the chain is on the lumenal side; that stretch reads APPMDSSLLP…KLSSPRQAMH (565 aa). A Ca(2+)-binding site is contributed by Asp135. Residues 141–453 enclose the Peptidase S8 domain; the sequence is QWHLVNPSFP…FGKIDAHKLI (313 aa). A glycan (N-linked (GlcNAc...) asparagine) is linked at Asn163. Asp175 (charge relay system) is an active-site residue. Asp184 provides a ligand contact to Ca(2+). The Charge relay system role is filled by His213. Ca(2+) is bound by residues Asn227, Asp277, Asp320, and Glu350. 2 disulfides stabilise this stretch: Cys230–Cys377 and Cys322–Cys352. Residue Ser385 is the Charge relay system of the active site. N-linked (GlcNAc...) asparagine glycans are attached at residues Asn404 and Asn480. Positions 462 to 596 constitute a P/Homo B domain; it reads VNAQTWFYLP…RLKLFGESID (135 aa). The interval 651–671 is disordered; the sequence is PQTTTASTDPDSDPNTPKKLS. Low complexity predominate over residues 653–667; the sequence is TTTASTDPDSDPNTP. The chain crosses the membrane as a helical span at residues 679-699; it reads YFLTIFLIGATFLVLYFMFFM. The Cytoplasmic portion of the chain corresponds to 700–814; the sequence is KSRRRIRRSR…PDVPPSSGRS (115 aa). The interval 756-814 is disordered; sequence SLSSSENGDAEHTIDSVLTNENPFSDPIKQKFPNDANAESASNKLQELQPDVPPSSGRS. Over residues 792 to 801 the composition is skewed to polar residues; it reads NAESASNKLQ.

The protein belongs to the peptidase S8 family. Furin subfamily. It depends on Ca(2+) as a cofactor. In terms of processing, O-glycosylated.

The protein resides in the golgi apparatus. The protein localises to the trans-Golgi network membrane. The catalysed reaction is Cleavage of -Lys-Arg-|-Xaa- and -Arg-Arg-|-Xaa- bonds to process yeast alpha-factor pheromone and killer toxin precursors.. Functionally, processing of precursors of alpha-factors and killer toxin. The sequence is that of Kexin (KEX2) from Saccharomyces cerevisiae (strain ATCC 204508 / S288c) (Baker's yeast).